The sequence spans 736 residues: uncharacterized protein (736 aa).

ABC transporter domains are found at residues 183–459 (IKID…KQME) and 518–734 (LQMS…TMTI). ATP is bound by residues 215–222 (GRNGIGKS) and 551–558 (GPNGAGKS).

This sequence belongs to the ABC transporter superfamily.

The protein localises to the cytoplasm. This is an uncharacterized protein from Schizosaccharomyces pombe (strain 972 / ATCC 24843) (Fission yeast).